A 41-amino-acid polypeptide reads, in one-letter code: Large ribosomal subunit protein bL36 (41 aa).

This sequence belongs to the bacterial ribosomal protein bL36 family.

This is Large ribosomal subunit protein bL36 from Bradyrhizobium diazoefficiens (strain JCM 10833 / BCRC 13528 / IAM 13628 / NBRC 14792 / USDA 110).